We begin with the raw amino-acid sequence, 169 residues long: Putative phosphoesterase SACOL1020 (169 aa).

H34 serves as the catalytic Proton donor. Short sequence motifs (HXTX) lie at residues 34-37 and 115-118; these read HVTI and HFTI. H115 (proton acceptor) is an active-site residue.

Belongs to the 2H phosphoesterase superfamily. YjcG family.

This chain is Putative phosphoesterase SACOL1020, found in Staphylococcus aureus (strain COL).